The following is a 444-amino-acid chain: Tol-Pal system protein TolB (444 aa).

The signal sequence occupies residues 1 to 19 (MRNIIYFILSLLFSVTSYA).

This sequence belongs to the TolB family. As to quaternary structure, the Tol-Pal system is composed of five core proteins: the inner membrane proteins TolA, TolQ and TolR, the periplasmic protein TolB and the outer membrane protein Pal. They form a network linking the inner and outer membranes and the peptidoglycan layer.

It localises to the periplasm. Part of the Tol-Pal system, which plays a role in outer membrane invagination during cell division and is important for maintaining outer membrane integrity. The chain is Tol-Pal system protein TolB from Rickettsia conorii (strain ATCC VR-613 / Malish 7).